The chain runs to 466 residues: Chromosomal replication initiator protein DnaA (466 aa).

The interval 1–86 (MSLSLWQQCL…EVGTKPVTQT (86 aa)) is domain I, interacts with DnaA modulators. Residues 86–129 (TLKTPVHNVVAPTQTTTAQPQRVAPAARSGWDNVPAPAEPTYRS) are domain II. The domain III, AAA+ region stretch occupies residues 130–346 (NVNVKHTFDN…GALNRVIANA (217 aa)). The ATP site is built by glycine 174, glycine 176, lysine 177, and threonine 178. Residues 347–466 (NFTGRAITID…FSNLIRTLSS (120 aa)) are domain IV, binds dsDNA.

Belongs to the DnaA family. Oligomerizes as a right-handed, spiral filament on DNA at oriC.

Its subcellular location is the cytoplasm. Plays an essential role in the initiation and regulation of chromosomal replication. ATP-DnaA binds to the origin of replication (oriC) to initiate formation of the DNA replication initiation complex once per cell cycle. Binds the DnaA box (a 9 base pair repeat at the origin) and separates the double-stranded (ds)DNA. Forms a right-handed helical filament on oriC DNA; dsDNA binds to the exterior of the filament while single-stranded (ss)DNA is stabiized in the filament's interior. The ATP-DnaA-oriC complex binds and stabilizes one strand of the AT-rich DNA unwinding element (DUE), permitting loading of DNA polymerase. After initiation quickly degrades to an ADP-DnaA complex that is not apt for DNA replication. Binds acidic phospholipids. This chain is Chromosomal replication initiator protein DnaA, found in Salmonella enteritidis PT4 (strain P125109).